An 85-amino-acid polypeptide reads, in one-letter code: U4-theraphotoxin-Hhn1e (85 aa).

The first 22 residues, 1–22 (MKVTLIAILTCAAVLVLHTTAA), serve as a signal peptide directing secretion. Positions 23 to 48 (EELEAESQLMEVGMPDTELAAVDEER) are excised as a propeptide. Intrachain disulfides connect cysteine 52–cysteine 66, cysteine 56–cysteine 77, and cysteine 71–cysteine 82.

This sequence belongs to the neurotoxin 12 (Hwtx-2) family. 02 (Hwtx-2) subfamily. In terms of tissue distribution, expressed by the venom gland.

The protein localises to the secreted. Postsynaptic neurotoxin. This is U4-theraphotoxin-Hhn1e from Cyriopagopus hainanus (Chinese bird spider).